The chain runs to 161 residues: Immunity protein YezG (161 aa).

In terms of assembly, monomer. Interacts with the C-terminus of cognate toxin YeeF, probably with 2:2 stoichiometry. The second YezG molecules binds with lower affinity.

The protein resides in the cytoplasm. Immunity component of an LXG toxin-immunity module. These modules promote kin selection, mediate competition in biofilms, and drive spatial segregation of different strains, indicating that LXG toxins may help avoid warfare between strains in biofilms. Neutralizes the toxic abilities of cognate toxin YeeF upon expression in E.coli and in vitro. The chain is Immunity protein YezG from Bacillus spizizenii (strain ATCC 23059 / NRRL B-14472 / W23) (Bacillus subtilis subsp. spizizenii).